Consider the following 288-residue polypeptide: Cyclin-dependent kinase 2 homolog (288 aa).

The Protein kinase domain occupies 4–284 (YHGLEKIGEG…AKEALQHAYF (281 aa)). Residues 10–18 (IGEGTYGVV) and K32 each bind ATP. T14 is modified (phosphothreonine). At Y15 the chain carries Phosphotyrosine. D125 functions as the Proton acceptor in the catalytic mechanism. A Phosphothreonine modification is found at T158.

It belongs to the protein kinase superfamily. CMGC Ser/Thr protein kinase family. CDC2/CDKX subfamily. As to quaternary structure, may form a complex composed of at least the catalytic subunit CRK2 and a cyclin. Mg(2+) serves as cofactor.

The protein resides in the cytoplasm. The catalysed reaction is L-seryl-[protein] + ATP = O-phospho-L-seryl-[protein] + ADP + H(+). It carries out the reaction L-threonyl-[protein] + ATP = O-phospho-L-threonyl-[protein] + ADP + H(+). The enzyme catalyses [DNA-directed RNA polymerase] + ATP = phospho-[DNA-directed RNA polymerase] + ADP + H(+). Its activity is regulated as follows. Phosphorylation at Thr-14 or Tyr-15 inactivates the enzyme, while phosphorylation at Thr-158 activates it. Serine/threonine-protein kinase. Involved in the control of the cell cycle. Required for entry into S-phase and mitosis. Probable component of the kinase complex that phosphorylates the repetitive C-terminus of RNA polymerase II. In Plasmodium knowlesi (strain H), this protein is Cyclin-dependent kinase 2 homolog.